Here is a 310-residue protein sequence, read N- to C-terminus: tRNA uridine(34) hydroxylase (310 aa).

Residues 127–225 enclose the Rhodanese domain; the sequence is KNQNTIVIDT…YLDDIPKEKN (99 aa). Cys-185 serves as the catalytic Cysteine persulfide intermediate.

It belongs to the TrhO family.

It catalyses the reaction uridine(34) in tRNA + AH2 + O2 = 5-hydroxyuridine(34) in tRNA + A + H2O. In terms of biological role, catalyzes oxygen-dependent 5-hydroxyuridine (ho5U) modification at position 34 in tRNAs. This chain is tRNA uridine(34) hydroxylase, found in Prochlorococcus marinus (strain MIT 9312).